We begin with the raw amino-acid sequence, 954 residues long: Kinesin-like protein KIN-7A (954 aa).

The segment at 1-29 is disordered; that stretch reads MGVSRPPSTPASKIERTPMSTPTPGGSTR. Over residues 17–28 the composition is skewed to low complexity; the sequence is TPMSTPTPGGST. One can recognise a Kinesin motor domain in the interval 34–354; the sequence is KIFVTVRVRP…LFFATCAKEV (321 aa). Position 119–126 (119–126) interacts with ATP; the sequence is GQTSSGKT. 2 coiled-coil regions span residues 363–436 and 480–588; these read VVSD…GDNQ and LKHE…LVMS. 2 disordered regions span residues 624–689 and 741–762; these read PNLI…SSVN and GKTN…DGPD. A compositionally biased stretch (low complexity) spans 630–639; that stretch reads PCSPLSSSRP. Basic and acidic residues-rich tracts occupy residues 640–660 and 666–681; these read LEPE…EGSE and KSED…ETPR.

The protein belongs to the TRAFAC class myosin-kinesin ATPase superfamily. Kinesin family. KIN-7 subfamily. In terms of tissue distribution, ubiquitous with a preferential expression in the shoot apical meristem (SAM).

In terms of biological role, may be essential to promote the progression of cytokinesis during node-internode differentiation. The sequence is that of Kinesin-like protein KIN-7A from Oryza sativa subsp. japonica (Rice).